Here is a 250-residue protein sequence, read N- to C-terminus: Probable phosphatase VIBHAR_04983 (250 aa).

Residues histidine 8, histidine 10, histidine 16, histidine 41, glutamate 74, histidine 102, histidine 132, aspartate 194, and histidine 196 each contribute to the Zn(2+) site.

This sequence belongs to the PHP family. It depends on Zn(2+) as a cofactor.

This Vibrio campbellii (strain ATCC BAA-1116) protein is Probable phosphatase VIBHAR_04983.